Reading from the N-terminus, the 261-residue chain is Expansin-B2 (261 aa).

The first 24 residues, 1-24 (MAGASAKVVAMLLSVLATYGFAAG), serve as a signal peptide directing secretion. The 107-residue stretch at 51–157 (GGACGFKNTN…RRVPCYHRGL (107 aa)) folds into the Expansin-like EG45 domain. 3 disulfides stabilise this stretch: Cys-54/Cys-82, Cys-85/Cys-152, and Cys-90/Cys-96. The Expansin-like CBD domain occupies 170-256 (VYLAVLVEFA…NWRANTNYGS (87 aa)).

This sequence belongs to the expansin family. Expansin B subfamily. In terms of tissue distribution, expressed in roots.

Its subcellular location is the secreted. It localises to the cell wall. The protein localises to the membrane. Functionally, may cause loosening and extension of plant cell walls by disrupting non-covalent bonding between cellulose microfibrils and matrix glucans. No enzymatic activity has been found. May be required for rapid internodal elongation in deepwater rice during submergence. The sequence is that of Expansin-B2 (EXPB2) from Oryza sativa subsp. japonica (Rice).